The sequence spans 161 residues: GTP-dependent dephospho-CoA kinase (161 aa).

GTP is bound by residues aspartate 37, isoleucine 38, aspartate 56, lysine 58, glutamate 112, and aspartate 135.

This sequence belongs to the GTP-dependent DPCK family.

The enzyme catalyses 3'-dephospho-CoA + GTP = GDP + CoA + H(+). It participates in cofactor biosynthesis; coenzyme A biosynthesis. Catalyzes the GTP-dependent phosphorylation of the 3'-hydroxyl group of dephosphocoenzyme A to form coenzyme A (CoA). The sequence is that of GTP-dependent dephospho-CoA kinase from Methanococcus aeolicus (strain ATCC BAA-1280 / DSM 17508 / OCM 812 / Nankai-3).